The chain runs to 358 residues: Fructose-bisphosphate aldolase (358 aa).

S61 is a binding site for D-glyceraldehyde 3-phosphate. Residue D108 is the Proton donor of the active site. Zn(2+)-binding residues include H109, D143, E173, and H225. Dihydroxyacetone phosphate is bound at residue G226. H264 serves as a coordination point for Zn(2+). Dihydroxyacetone phosphate-binding positions include 265 to 267 and 286 to 289; these read GGS and NIDT. Residues T289, T312, T340, and T342 each carry the phosphothreonine modification.

Belongs to the class II fructose-bisphosphate aldolase family. As to quaternary structure, homodimer. The cofactor is Zn(2+).

It carries out the reaction beta-D-fructose 1,6-bisphosphate = D-glyceraldehyde 3-phosphate + dihydroxyacetone phosphate. Its pathway is carbohydrate degradation; glycolysis; D-glyceraldehyde 3-phosphate and glycerone phosphate from D-glucose: step 4/4. In terms of biological role, catalyzes the aldol condensation of dihydroxyacetone phosphate (DHAP or glycerone-phosphate) with glyceraldehyde 3-phosphate (G3P) to form fructose 1,6-bisphosphate (FBP) in gluconeogenesis and the reverse reaction in glycolysis. In Schizosaccharomyces pombe (strain 972 / ATCC 24843) (Fission yeast), this protein is Fructose-bisphosphate aldolase (fba1).